Reading from the N-terminus, the 512-residue chain is Paraspeckle component 1 (512 aa).

Composition is skewed to polar residues over residues 1-29 and 46-55; these read MANPNLKQVNIQNNATFPHQQNVTRSTES and DPSSANSEPQ. The segment at 1 to 56 is disordered; it reads MANPNLKQVNIQNNATFPHQQNVTRSTESPGDPKETMEAVAPSPQDPSSANSEPQE. RRM domains follow at residues 76–148 and 150–231; these read CRLF…FATH and AALT…PTEQ. Residues 276–366 adopt a coiled-coil conformation; the sequence is LDEMDKQQRE…MIRHREQLDI (91 aa). The segment at 451–512 is disordered; that stretch reads GPLQMGSPVG…DGPNNKRRRY (62 aa). Over residues 464 to 474 the composition is skewed to polar residues; that stretch reads GVDSPQPQQHS. Over residues 488–502 the composition is skewed to gly residues; that stretch reads GQSGFGRGSPVGGSF.

It belongs to the PSPC family.

It localises to the nucleus speckle. In terms of biological role, RNA-binding protein required for the formation of nuclear paraspeckles. Binds to poly(A), poly(G) and poly(U) RNA homopolymers. The protein is Paraspeckle component 1 (pspc1) of Danio rerio (Zebrafish).